Here is a 321-residue protein sequence, read N- to C-terminus: Probable 2-oxoglutarate-dependent dioxygenase AOP1.2 (321 aa).

One can recognise a Fe2OG dioxygenase domain in the interval 165–270 (TYYLTRLMKY…RYSTGLFSIP (106 aa)). Positions 194, 196, and 251 each coordinate Fe cation. A 2-oxoglutarate-binding site is contributed by R261.

It belongs to the iron/ascorbate-dependent oxidoreductase family. Requires Fe(2+) as cofactor.

In terms of biological role, probable 2-oxoglutarate-dependent dioxygenase that may be involved in glucosinolates biosynthesis. May play a role in the production of aliphatic glucosinolates. The sequence is that of Probable 2-oxoglutarate-dependent dioxygenase AOP1.2 (AOP1.2) from Arabidopsis thaliana (Mouse-ear cress).